A 630-amino-acid chain; its full sequence is Kelch-like protein 14 (630 aa).

A BTB domain is found at 33–153 (CDVTLTAQGQ…LYTANVTLSL (121 aa)). The interval 69 to 117 (GGGVGGQDGLGAPKDQQQQQQPQQQPPQQQQPPPQEEPGTPSSSPDDKL) is disordered. Residues 84–96 (QQQQQQPQQQPPQ) are compositionally biased toward low complexity. The region spanning 212-281 (VEDVLLLNFE…PAPELVERVQ (70 aa)) is the BACK domain. Kelch repeat units follow at residues 325 to 374 (MLLL…EVEN), 375 to 426 (FLFV…RLDK), 427 to 473 (HLYV…VHNG), 475 to 520 (IYIS…VMND), 522 to 572 (LYAI…VLDD), and 574 to 622 (IYLV…TVIL).

As to quaternary structure, interacts with TOR1A. In terms of tissue distribution, expressed in the brain, primarily in neurons. In the cerebral cortex, mostly expressed in layers I and II (at protein level). Also observed in some neurons of the corpus striatum (at protein level). Expressed at high levels in the hippocampus, including in pyramidal cells of the CA1 and CA3 layers (at protein level). In the cerebellum, expression in Purkinje cells is higher than in granular cells (at protein level). Also detected in the medial septum, ventral pallidum, thalamus, hypothalamus, amygdala, inferior colliculi, locus caeruleus, peripyramidal nucleus, raphe nucleus, reticular formation, spinal trigeminal nucleus, and vestibular nuclei (at protein level). Low expression, if any, in glial cells (at protein level). Not observed in the corpus callosum.

It is found in the cytoplasm. The protein resides in the cytosol. Its subcellular location is the endoplasmic reticulum membrane. The protein is Kelch-like protein 14 (Klhl14) of Mus musculus (Mouse).